The following is a 237-amino-acid chain: 7-cyano-7-deazaguanine synthase (237 aa).

9–19 (YSGGLDSTTCL) contributes to the ATP binding site. Zn(2+)-binding residues include Cys189, Cys199, Cys202, and Cys205.

Belongs to the QueC family. Zn(2+) is required as a cofactor.

It carries out the reaction 7-carboxy-7-deazaguanine + NH4(+) + ATP = 7-cyano-7-deazaguanine + ADP + phosphate + H2O + H(+). It functions in the pathway purine metabolism; 7-cyano-7-deazaguanine biosynthesis. In terms of biological role, catalyzes the ATP-dependent conversion of 7-carboxy-7-deazaguanine (CDG) to 7-cyano-7-deazaguanine (preQ(0)). This chain is 7-cyano-7-deazaguanine synthase, found in Geobacter sulfurreducens (strain ATCC 51573 / DSM 12127 / PCA).